A 110-amino-acid polypeptide reads, in one-letter code: U1-lycotoxin-Ls1kk (110 aa).

The first 20 residues, 1-20 (MKFVLLFGVFLVTLFSYSSA), serve as a signal peptide directing secretion. The propeptide occupies 21–44 (EMLDDFDQADEDELLSLIEKEEAR). Cystine bridges form between Cys-47-Cys-62, Cys-54-Cys-71, Cys-61-Cys-89, and Cys-73-Cys-87.

Belongs to the neurotoxin 19 (CSTX) family. 03 subfamily. In terms of tissue distribution, expressed by the venom gland.

It is found in the secreted. This Lycosa singoriensis (Wolf spider) protein is U1-lycotoxin-Ls1kk.